A 188-amino-acid chain; its full sequence is Probable nicotinate-nucleotide adenylyltransferase (188 aa).

This sequence belongs to the NadD family.

It carries out the reaction nicotinate beta-D-ribonucleotide + ATP + H(+) = deamido-NAD(+) + diphosphate. Its pathway is cofactor biosynthesis; NAD(+) biosynthesis; deamido-NAD(+) from nicotinate D-ribonucleotide: step 1/1. Functionally, catalyzes the reversible adenylation of nicotinate mononucleotide (NaMN) to nicotinic acid adenine dinucleotide (NaAD). The sequence is that of Probable nicotinate-nucleotide adenylyltransferase from Listeria welshimeri serovar 6b (strain ATCC 35897 / DSM 20650 / CCUG 15529 / CIP 8149 / NCTC 11857 / SLCC 5334 / V8).